Consider the following 616-residue polypeptide: Dihydroxy-acid dehydratase (616 aa).

D81 lines the Mg(2+) pocket. C122 contributes to the [2Fe-2S] cluster binding site. Mg(2+)-binding residues include D123 and K124. K124 carries the post-translational modification N6-carboxylysine. C195 serves as a coordination point for [2Fe-2S] cluster. E491 provides a ligand contact to Mg(2+). The Proton acceptor role is filled by S517.

It belongs to the IlvD/Edd family. In terms of assembly, homodimer. Requires [2Fe-2S] cluster as cofactor. Mg(2+) serves as cofactor.

The catalysed reaction is (2R)-2,3-dihydroxy-3-methylbutanoate = 3-methyl-2-oxobutanoate + H2O. It catalyses the reaction (2R,3R)-2,3-dihydroxy-3-methylpentanoate = (S)-3-methyl-2-oxopentanoate + H2O. Its pathway is amino-acid biosynthesis; L-isoleucine biosynthesis; L-isoleucine from 2-oxobutanoate: step 3/4. It participates in amino-acid biosynthesis; L-valine biosynthesis; L-valine from pyruvate: step 3/4. Its function is as follows. Functions in the biosynthesis of branched-chain amino acids. Catalyzes the dehydration of (2R,3R)-2,3-dihydroxy-3-methylpentanoate (2,3-dihydroxy-3-methylvalerate) into 2-oxo-3-methylpentanoate (2-oxo-3-methylvalerate) and of (2R)-2,3-dihydroxy-3-methylbutanoate (2,3-dihydroxyisovalerate) into 2-oxo-3-methylbutanoate (2-oxoisovalerate), the penultimate precursor to L-isoleucine and L-valine, respectively. This is Dihydroxy-acid dehydratase from Salmonella dublin (strain CT_02021853).